The sequence spans 239 residues: MRPSGRKTDQMRKVSFERNFSKHAEGSCLVKFGDTHVLCTASLEEKTPPWLRNTGKGWVTAEYGMLPRATGERMKREAAAGKQGGRTQEIQRLIGRSLRAVVDLQALGEKQITLDCDVIQADGGTRTASITGGWIALYDCLKWMESRNMIKVDRVLKDHVAAISCGVFANQAVIDLDYLEDSSAETDANFVMTGAGGIVEIQGTAEGTPFSEEEFSSLMRLAKNGIGELVALQKQAIAG.

Residues R86 and 124–126 (GTR) each bind phosphate.

The protein belongs to the RNase PH family. Homohexameric ring arranged as a trimer of dimers.

It carries out the reaction tRNA(n+1) + phosphate = tRNA(n) + a ribonucleoside 5'-diphosphate. In terms of biological role, phosphorolytic 3'-5' exoribonuclease that plays an important role in tRNA 3'-end maturation. Removes nucleotide residues following the 3'-CCA terminus of tRNAs; can also add nucleotides to the ends of RNA molecules by using nucleoside diphosphates as substrates, but this may not be physiologically important. Probably plays a role in initiation of 16S rRNA degradation (leading to ribosome degradation) during starvation. The chain is Ribonuclease PH from Rhizobium etli (strain ATCC 51251 / DSM 11541 / JCM 21823 / NBRC 15573 / CFN 42).